Reading from the N-terminus, the 233-residue chain is 5'-methylthioadenosine/S-adenosylhomocysteine nucleosidase (233 aa).

Residue E12 is the Proton acceptor of the active site. Substrate contacts are provided by residues G78, I153, and 174–175 (ME). Catalysis depends on D198, which acts as the Proton donor.

This sequence belongs to the PNP/UDP phosphorylase family. MtnN subfamily.

The catalysed reaction is S-adenosyl-L-homocysteine + H2O = S-(5-deoxy-D-ribos-5-yl)-L-homocysteine + adenine. The enzyme catalyses S-methyl-5'-thioadenosine + H2O = 5-(methylsulfanyl)-D-ribose + adenine. It carries out the reaction 5'-deoxyadenosine + H2O = 5-deoxy-D-ribose + adenine. It participates in amino-acid biosynthesis; L-methionine biosynthesis via salvage pathway; S-methyl-5-thio-alpha-D-ribose 1-phosphate from S-methyl-5'-thioadenosine (hydrolase route): step 1/2. In terms of biological role, catalyzes the irreversible cleavage of the glycosidic bond in both 5'-methylthioadenosine (MTA) and S-adenosylhomocysteine (SAH/AdoHcy) to adenine and the corresponding thioribose, 5'-methylthioribose and S-ribosylhomocysteine, respectively. Also cleaves 5'-deoxyadenosine, a toxic by-product of radical S-adenosylmethionine (SAM) enzymes, into 5-deoxyribose and adenine. In Exiguobacterium sp. (strain ATCC BAA-1283 / AT1b), this protein is 5'-methylthioadenosine/S-adenosylhomocysteine nucleosidase.